A 2715-amino-acid chain; its full sequence is Histone-lysine N-methyltransferase 2B (2715 aa).

Over residues 1 to 11 (MAAAAGGGSCP) the composition is skewed to gly residues. 4 disordered regions span residues 1 to 65 (MAAA…GEDT), 81 to 302 (RRLW…GGLP), 320 to 518 (SLGL…PKST), and 532 to 771 (VSAR…QMPP). A2 is modified (N-acetylalanine). Residues 12-24 (GPGSARGRFPGRP) are compositionally biased toward low complexity. The short motif at 17-36 (RGRFPGRPRGAGGGGGRGGR) is the Menin-binding motif (MBM) element. Composition is skewed to gly residues over residues 25-38 (RGAG…GRGN) and 49-60 (RGGGATGPGGAE). A DNA-binding region (a.T hook 1) is located at residues 37-44 (GNGAERVR). The segment covering 109-123 (PEEESSDGESDEEEF) has biased composition (acidic residues). The a.T hook 2 DNA-binding region spans 110-117 (EEESSDGE). S113, S114, and S118 each carry phosphoserine. A compositionally biased stretch (basic residues) spans 144-158 (QRGRAPRGRGRKHKT). Residues 160-176 (PLPPPRLADVAPTPPKT) show a composition bias toward pro residues. The span at 199–208 (RAQAPQAPRS) shows a compositional bias: low complexity. Position 351 is a phosphoserine (S351). The segment at residues 357 to 365 (QEQKLDDEE) is a DNA-binding region (a.T hook 3). Over residues 361–374 (LDDEEEEKKEEEEK) the composition is skewed to acidic residues. Over residues 375 to 387 (DKEGEEKEERAVA) the composition is skewed to basic and acidic residues. Positions 401 to 449 (LPPPPLTPPAPSPPPPLPPPSTSPPPPLCPPPPPPVSPPPLPSPPPPPA) are enriched in pro residues. The span at 545–556 (RFMDEDPPKPPK) shows a compositional bias: basic and acidic residues. Residues 568-596 (TTSPPVPQEPAPVPSPPRAPTPPSTPVPL) show a composition bias toward pro residues. A compositionally biased stretch (basic and acidic residues) spans 597–608 (PEKRRSILREPT). Pro residues predominate over residues 618–637 (LPPPPPAPPPPPAPSPPPAP). Residues 731 to 751 (PQTQAQLLQPLQALQTQLLPQ) show a composition bias toward low complexity. The segment covering 752–769 (ALPPPQPQLQPPPSPQQM) has biased composition (pro residues). Residue K805 forms a Glycyl lysine isopeptide (Lys-Gly) (interchain with G-Cter in SUMO2) linkage. Disordered regions lie at residues 819-868 (PLSP…GPRI) and 894-959 (SALP…HHGK). Phosphoserine is present on residues S821, S844, and S861. Over residues 836–857 (ISDRGPVRSEDESVEAKRERPS) the composition is skewed to basic and acidic residues. A compositionally biased stretch (low complexity) spans 907 to 917 (EDTSSASETES). The residue at position 936 (S936) is a Phosphoserine. The span at 948-959 (TPRRSLPSHHGK) shows a compositional bias: basic residues. The segment at 959–1006 (KKMRMARCGHCRGCLRVQDCGSCVNCLDKPKFGGPNTKKQCCVYRKCD) adopts a CXXC-type zinc-finger fold. C966, C969, C972, C978, C981, C984, C1000, and C1005 together coordinate Zn(2+). The disordered stretch occupies residues 1027 to 1132 (LLPWDSDESP…RPRKPTLQPV (106 aa)). S1032, S1035, S1092, and S1095 each carry phosphoserine. K1136 participates in a covalent cross-link: Glycyl lysine isopeptide (Lys-Gly) (interchain with G-Cter in SUMO2). The tract at residues 1146–1166 (LAPGPFASFPNGWTGKQKSPD) is disordered. PHD-type zinc fingers lie at residues 1201–1252 (PMVC…CKFC), 1249–1303 (CKFC…CVRC), and 1335–1396 (GNYC…CAGA). One can recognise a Bromo domain in the interval 1404 to 1504 (ALSGALQGGL…GLLLKLLESA (101 aa)). Residues 1545–1567 (QQEPETPESGQPPGDPSAAFQGK) are disordered. A C2HC pre-PHD-type zinc finger spans residues 1578-1618 (PRQCALCLKYGDADSKEAGRLLYIGQNEWTHVNCAIWSAEV). A PHD-type 4 zinc finger spans residues 1639–1686 (MRCELCLKPGATVGCCLSSCLSNFHFMCARASYCIFQDDKKVFCQKHT). The FYR N-terminal domain occupies 1727–1783 (AINVLIGSIRIDSLGTLSDLSDCEGRLFPIGYQCSRLYWSTVDARRRCWYRCRILEY). Disordered regions lie at residues 1806–1978 (HSPA…PDFE), 2008–2093 (VAAG…VVRA), 2118–2162 (LKNL…PTRT), and 2280–2412 (RVST…RTGP). The span at 1876–1894 (PLGGVSFGPLPSPGSPSSL) shows a compositional bias: low complexity. 2 positions are modified to phosphoserine: S1930 and S1936. Pro residues predominate over residues 1960-1972 (PPGPAPSPPPPED). A compositionally biased stretch (acidic residues) spans 2062 to 2072 (DGVDDGTDSEA). T2068 and T2083 each carry phosphothreonine. Polar residues predominate over residues 2144–2153 (NGSQPSQGLT). Phosphoserine is present on residues S2288 and S2348. Low complexity predominate over residues 2342–2351 (EPAGEESPGP). Over residues 2359–2373 (LPLPEDGPPQVPDGP) the composition is skewed to pro residues. Residues 2411 to 2492 (GPHLRFEISS…QRCQHYKFRY (82 aa)) form the FYR C-terminal domain. The short motif at 2508–2513 (GAARAE) is the WDR5 interaction motif (WIN) element. The 117-residue stretch at 2575–2691 (EAVGVYRSAI…RGEELTYDYK (117 aa)) folds into the SET domain. S-adenosyl-L-methionine contacts are provided by residues H2585, R2587, Y2629, and 2652–2653 (NH). The Zn(2+) site is built by C2655 and C2703. Residues 2699–2715 (NKLPCNCGAKRCRRFLN) enclose the Post-SET domain. S-adenosyl-L-methionine is bound at residue N2704. Zn(2+)-binding residues include C2705 and C2710.

Belongs to the class V-like SAM-binding methyltransferase superfamily. Histone-lysine methyltransferase family. TRX/MLL subfamily. In terms of assembly, component of the menin-associated histone methyltransferase complex, at least composed of KMT2B/MLL4, ASH2L, RBBP5, WDR5, DPY30, MEN1; the complex interacts with POLR2A and POLR2B via MEN1. Interacts with NFE2. Interacts with KDM6B. Interacts (via WIN motif) with WDR5. Interacts (via MBM motif) with MEN1. Forms a core complex with the evolutionary conserved subcomplex WRAD composed of WDR5, RBBP5, ASH2L/ASH2 and DPY30 subunits; WRAD differentially stimulates the methyltransferase activity. Widely expressed. Highest levels in testis. Also found in brain with higher expression in the cerebellum than in any other region, bone marrow, heart, muscle, kidney, placenta, spleen, thymus, prostate, ovary, intestine, colon, peripheral blood lymphocytes and pancreas. Often amplified in pancreatic carcinomas.

It localises to the nucleus. It carries out the reaction L-lysyl(4)-[histone H3] + S-adenosyl-L-methionine = N(6)-methyl-L-lysyl(4)-[histone H3] + S-adenosyl-L-homocysteine + H(+). It catalyses the reaction N(6)-methyl-L-lysyl(4)-[histone H3] + S-adenosyl-L-methionine = N(6),N(6)-dimethyl-L-lysyl(4)-[histone H3] + S-adenosyl-L-homocysteine + H(+). Its function is as follows. Histone methyltransferase that catalyzes methyl group transfer from S-adenosyl-L-methionine to the epsilon-amino group of 'Lys-4' of histone H3 (H3K4) via a non-processive mechanism. Part of chromatin remodeling machinery predominantly forms H3K4me1 and H3K4me2 methylation marks at active chromatin sites where transcription and DNA repair take place. Likely plays a redundant role with KMT2C in enriching H3K4me1 marks on primed and active enhancer elements. Plays a central role in beta-globin locus transcription regulation by being recruited by NFE2. Plays an important role in controlling bulk H3K4me during oocyte growth and preimplantation development. Required during the transcriptionally active period of oocyte growth for the establishment and/or maintenance of bulk H3K4 trimethylation (H3K4me3), global transcriptional silencing that preceeds resumption of meiosis, oocyte survival and normal zygotic genome activation. In Homo sapiens (Human), this protein is Histone-lysine N-methyltransferase 2B (KMT2B).